A 569-amino-acid chain; its full sequence is 3-(3-hydroxy-phenyl)propionate/3-hydroxycinnamic acid hydroxylase (569 aa).

Residues 8 to 37 and 273 to 283 contribute to the FAD site; these read DVVIVGAGPAGLTLANILGLEGVRVLVVDE and FREGRLMLAGD.

This sequence belongs to the PheA/TfdB FAD monooxygenase family. Requires FAD as cofactor.

The enzyme catalyses 3-(3-hydroxyphenyl)propanoate + NADH + O2 + H(+) = 3-(2,3-dihydroxyphenyl)propanoate + NAD(+) + H2O. It carries out the reaction (2E)-3-(3-hydroxyphenyl)prop-2-enoate + NADH + O2 + H(+) = (2E)-3-(2,3-dihydroxyphenyl)prop-2-enoate + NAD(+) + H2O. It functions in the pathway aromatic compound metabolism; 3-phenylpropanoate degradation. Functionally, catalyzes the insertion of one atom of molecular oxygen into position 2 of the phenyl ring of 3-(3-hydroxyphenyl)propionate (3-HPP) and hydroxycinnamic acid (3HCI). This is 3-(3-hydroxy-phenyl)propionate/3-hydroxycinnamic acid hydroxylase from Mycolicibacterium gilvum (strain PYR-GCK) (Mycobacterium gilvum (strain PYR-GCK)).